The following is a 213-amino-acid chain: Protein-L-isoaspartate O-methyltransferase (213 aa).

Residue S61 is part of the active site.

This sequence belongs to the methyltransferase superfamily. L-isoaspartyl/D-aspartyl protein methyltransferase family.

Its subcellular location is the cytoplasm. The catalysed reaction is [protein]-L-isoaspartate + S-adenosyl-L-methionine = [protein]-L-isoaspartate alpha-methyl ester + S-adenosyl-L-homocysteine. Catalyzes the methyl esterification of L-isoaspartyl residues in peptides and proteins that result from spontaneous decomposition of normal L-aspartyl and L-asparaginyl residues. It plays a role in the repair and/or degradation of damaged proteins. This is Protein-L-isoaspartate O-methyltransferase from Petrotoga mobilis (strain DSM 10674 / SJ95).